The following is a 456-amino-acid chain: N(6)-adenosine-methyltransferase non-catalytic subunit METTL14 (456 aa).

The tract at residues 50–75 (TCRASYDTSAPNAKRKYLDEGETDED) is disordered. 2 interaction with METTL3 regions span residues 135-136 (RD) and 237-238 (SG). The positively charged region required for RNA-binding stretch occupies residues 245–254 (RVCLRKWGYR). Interaction with METTL3 regions lie at residues 255 to 258 (RCED) and 278 to 287 (KAVFQRTKEH). The segment at 297–298 (KR) is positively charged region required for RNA-binding. Residues 308–312 (NVDID) form an interaction with METTL3 region. Positions 393–456 (ERLRPKSPPP…GAHRGGFPPR (64 aa)) are disordered. Serine 399 is subject to Phosphoserine. Positions 409-423 (GGGAPRGGGRGGTSA) are enriched in gly residues. Residues 425–440 (RGRERNRSNFRGERGG) are compositionally biased toward basic and acidic residues. Residues 441 to 450 (FRGGRGGAHR) are compositionally biased toward gly residues.

Belongs to the MT-A70-like family. As to quaternary structure, heterodimer; heterodimerizes with METTL3 to form an antiparallel heterodimer that constitutes an active methyltransferase. Component of the WMM complex, a N6-methyltransferase complex composed of a catalytic subcomplex, named MAC, and of an associated subcomplex, named MACOM. The MAC subcomplex is composed of METTL3 and METTL14. The MACOM subcomplex is composed of WTAP, ZC3H13, CBLL1/HAKAI, VIRMA, and, in some cases of RBM15 (RBM15 or RBM15B).

The protein localises to the nucleus. Its function is as follows. The METTL3-METTL14 heterodimer forms a N6-methyltransferase complex that methylates adenosine residues at the N(6) position of some mRNAs and regulates the circadian clock, differentiation of embryonic stem cells and cortical neurogenesis. In the heterodimer formed with METTL3, METTL14 constitutes the RNA-binding scaffold that recognizes the substrate rather than the catalytic core. N6-methyladenosine (m6A), which takes place at the 5'-[AG]GAC-3' consensus sites of some mRNAs, plays a role in mRNA stability and processing. M6A acts as a key regulator of mRNA stability by promoting mRNA destabilization and degradation. In embryonic stem cells (ESCs), m6A methylation of mRNAs encoding key naive pluripotency-promoting transcripts results in transcript destabilization. M6A regulates spermatogonial differentiation and meiosis and is essential for male fertility and spermatogenesis. M6A also regulates cortical neurogenesis: m6A methylation of transcripts related to transcription factors, neural stem cells, the cell cycle and neuronal differentiation during brain development promotes their destabilization and decay, promoting differentiation of radial glial cells. This chain is N(6)-adenosine-methyltransferase non-catalytic subunit METTL14, found in Homo sapiens (Human).